The chain runs to 442 residues: HTH-type transcriptional regulator NorG (442 aa).

Residues 2–46 (KIPSHRQLAIQYNVNRVTIIKSIELLEAEGFIYTKVGSGTYVNDY) enclose the HTH gntR-type domain. The segment at residues 6–25 (HRQLAIQYNVNRVTIIKSIE) is a DNA-binding region (H-T-H motif). At Lys-288 the chain carries N6-(pyridoxal phosphate)lysine.

In the C-terminal section; belongs to the class-I pyridoxal-phosphate-dependent aminotransferase family. Requires pyridoxal 5'-phosphate as cofactor.

Its function is as follows. Positively regulates the expression of the NorB efflux pump and negatively regulates the expression of the AbcA efflux pump. Binds specifically to the promoters of norA, norB and norC and abcA genes. Could also have an aminotransferase activity. This Staphylococcus aureus (strain USA300) protein is HTH-type transcriptional regulator NorG (norG).